Here is a 280-residue protein sequence, read N- to C-terminus: 3-deoxy-manno-octulosonate cytidylyltransferase (280 aa).

This sequence belongs to the KdsB family.

It is found in the cytoplasm. It catalyses the reaction 3-deoxy-alpha-D-manno-oct-2-ulosonate + CTP = CMP-3-deoxy-beta-D-manno-octulosonate + diphosphate. The protein operates within nucleotide-sugar biosynthesis; CMP-3-deoxy-D-manno-octulosonate biosynthesis; CMP-3-deoxy-D-manno-octulosonate from 3-deoxy-D-manno-octulosonate and CTP: step 1/1. Its pathway is bacterial outer membrane biogenesis; lipopolysaccharide biosynthesis. Activates KDO (a required 8-carbon sugar) for incorporation into bacterial lipopolysaccharide in Gram-negative bacteria. The protein is 3-deoxy-manno-octulosonate cytidylyltransferase of Colwellia psychrerythraea (strain 34H / ATCC BAA-681) (Vibrio psychroerythus).